Consider the following 347-residue polypeptide: Oocyte-specific homeobox protein 6 (347 aa).

Disordered regions lie at residues 1–20 (MLQYNQSPHMPQDPSLHSKF) and 54–86 (PRSPMQSSHSVPERDLCPQESQGPSGKSSIQMQ). Residues 72–85 (QESQGPSGKSSIQM) show a composition bias toward polar residues. Residues 145–204 (HRKIRTVYTEEQKCVLKKHFHKCTYPSREQRMALAVLVGVTANEIQIWFKNHRAKSKRES) constitute a DNA-binding region (homeobox).

Belongs to the paired homeobox family. Obox subfamily. Specifically expressed in early embryos.

It localises to the nucleus. In terms of biological role, transcription factor required for zygotic genome activation (ZGA), a critical event in early embryonic development during which the developmental control passes from maternally provided mRNAs to the expression of the zygotic genome after fertilization. The chain is Oocyte-specific homeobox protein 6 from Mus musculus (Mouse).